A 309-amino-acid polypeptide reads, in one-letter code: MPIRVPDELPAVNFLRQENVFVMTTSRASVQEIRPLKVLILNLMPKKIETENQFLRLLSNSPLQVDIRLLRIDSRESRNTPAEHLNNFYCNFEDICDENYDGLIVTGAPLGLVEFNDVAYWPQIQQVLEWAKEHVTSTLFVCWAVQAALNILYGIPKQTRQEKISGVYEHHITQPHALLTKGFDDTFLAPHSRYADFPAALIRDYTDLDILAESEEGDAYLFASKDKRIAFVTGHPEYDALTLAGEYFRDVEAGLAPRVPYNYFPNNDPTKTPRATWRSHGNLLFTNWLNYYVYQITPYDLRHMNPTLE.

Cys142 functions as the Acyl-thioester intermediate in the catalytic mechanism. Lys163 and Ser192 together coordinate substrate. Catalysis depends on His235, which acts as the Proton acceptor. Residue Glu237 is part of the active site. Arg249 provides a ligand contact to substrate.

The protein belongs to the MetA family.

The protein resides in the cytoplasm. The enzyme catalyses L-homoserine + succinyl-CoA = O-succinyl-L-homoserine + CoA. It participates in amino-acid biosynthesis; L-methionine biosynthesis via de novo pathway; O-succinyl-L-homoserine from L-homoserine: step 1/1. Its function is as follows. Transfers a succinyl group from succinyl-CoA to L-homoserine, forming succinyl-L-homoserine. This chain is Homoserine O-succinyltransferase, found in Cronobacter sakazakii (strain ATCC BAA-894) (Enterobacter sakazakii).